A 440-amino-acid polypeptide reads, in one-letter code: Dihydrolipoyllysine-residue acetyltransferase component of pyruvate dehydrogenase complex (440 aa).

The Lipoyl-binding domain maps to 2 to 78; sequence SIEVKMPALS…AVGQVIAVMA (77 aa). K43 is modified (N6-lipoyllysine). Residues 91 to 113 form a disordered region; the sequence is ASSQISEPSEKADVAQKETADSE. The segment covering 98–110 has biased composition (basic and acidic residues); that stretch reads PSEKADVAQKETA. The region spanning 149 to 186 is the Peripheral subunit-binding (PSBD) domain; that stretch reads KASPLAKRLAKKNHVDLKQVNGSGPHGRIIKADIEAFI. Over residues 192–202 the composition is skewed to polar residues; that stretch reads ASSNPSVSTPE. The interval 192-214 is disordered; it reads ASSNPSVSTPEASGKITHDTPHN. The active site involves H412.

Belongs to the 2-oxoacid dehydrogenase family. In terms of assembly, forms a 24-polypeptide structural core with octahedral symmetry. (R)-lipoate serves as cofactor.

It catalyses the reaction N(6)-[(R)-dihydrolipoyl]-L-lysyl-[protein] + acetyl-CoA = N(6)-[(R)-S(8)-acetyldihydrolipoyl]-L-lysyl-[protein] + CoA. Functionally, the pyruvate dehydrogenase complex catalyzes the overall conversion of pyruvate to acetyl-CoA and CO(2). It contains multiple copies of three enzymatic components: pyruvate dehydrogenase (E1), dihydrolipoamide acetyltransferase (E2) and lipoamide dehydrogenase (E3). This Zymomonas mobilis subsp. mobilis (strain ATCC 31821 / ZM4 / CP4) protein is Dihydrolipoyllysine-residue acetyltransferase component of pyruvate dehydrogenase complex (pdhC).